The primary structure comprises 205 residues: ATP phosphoribosyltransferase (205 aa).

It belongs to the ATP phosphoribosyltransferase family. Short subfamily.

The protein resides in the cytoplasm. It carries out the reaction 1-(5-phospho-beta-D-ribosyl)-ATP + diphosphate = 5-phospho-alpha-D-ribose 1-diphosphate + ATP. It functions in the pathway amino-acid biosynthesis; L-histidine biosynthesis; L-histidine from 5-phospho-alpha-D-ribose 1-diphosphate: step 1/9. Its function is as follows. Catalyzes the condensation of ATP and 5-phosphoribose 1-diphosphate to form N'-(5'-phosphoribosyl)-ATP (PR-ATP). Has a crucial role in the pathway because the rate of histidine biosynthesis seems to be controlled primarily by regulation of HisG enzymatic activity. The chain is ATP phosphoribosyltransferase from Thermococcus gammatolerans (strain DSM 15229 / JCM 11827 / EJ3).